The primary structure comprises 73 residues: Putative antimicrobial peptide clone 5 (73 aa).

Positions 1-22 (MQIKHLITLFFLVLIGADQCSA) are cleaved as a signal peptide. Positions 45–73 (EVSPQIDQYRNFQKREAELEELLDRLPMY) are excised as a propeptide.

This sequence belongs to the non-disulfide-bridged peptide (NDBP) superfamily. Short antimicrobial peptide (group 4) family. As to expression, expressed by the venom gland.

It localises to the secreted. Antibacterial peptide. In Tityus costatus (Brazilian scorpion), this protein is Putative antimicrobial peptide clone 5.